We begin with the raw amino-acid sequence, 644 residues long: Exoribonuclease 2 (644 aa).

Residues 189-516 (RQDLTALNFV…NHRLLKAVIK (328 aa)) enclose the RNB domain. In terms of domain architecture, S1 motif spans 561-643 (NTRFAAEIID…ETRSIIARPA (83 aa)).

The protein belongs to the RNR ribonuclease family. RNase II subfamily.

The protein localises to the cytoplasm. The enzyme catalyses Exonucleolytic cleavage in the 3'- to 5'-direction to yield nucleoside 5'-phosphates.. Its function is as follows. Involved in mRNA degradation. Hydrolyzes single-stranded polyribonucleotides processively in the 3' to 5' direction. This Salmonella gallinarum (strain 287/91 / NCTC 13346) protein is Exoribonuclease 2.